We begin with the raw amino-acid sequence, 267 residues long: Type II pantothenate kinase (267 aa).

Residue 6–13 (DAGGTLIK) participates in ATP binding. E70 serves as the catalytic Proton acceptor. ATP is bound by residues T99, 121–125 (GGMIQ), Y137, and S225.

The protein belongs to the type II pantothenate kinase family. As to quaternary structure, homodimer.

The protein resides in the cytoplasm. It catalyses the reaction (R)-pantothenate + ATP = (R)-4'-phosphopantothenate + ADP + H(+). Its pathway is cofactor biosynthesis; coenzyme A biosynthesis; CoA from (R)-pantothenate: step 1/5. Catalyzes the phosphorylation of pantothenate (Pan), the first step in CoA biosynthesis. This is Type II pantothenate kinase from Staphylococcus aureus (strain Mu50 / ATCC 700699).